The sequence spans 152 residues: Large ribosomal subunit protein bL9 (152 aa).

This sequence belongs to the bacterial ribosomal protein bL9 family.

Functionally, binds to the 23S rRNA. In Mycobacterium marinum (strain ATCC BAA-535 / M), this protein is Large ribosomal subunit protein bL9.